Consider the following 314-residue polypeptide: Lipoyl synthase (314 aa).

[4Fe-4S] cluster is bound by residues C67, C72, C78, C93, C97, C100, and S306. A Radical SAM core domain is found at 79–295 (FNRGTATFMI…KNYALSIGFK (217 aa)).

This sequence belongs to the radical SAM superfamily. Lipoyl synthase family. The cofactor is [4Fe-4S] cluster.

The protein localises to the cytoplasm. It catalyses the reaction [[Fe-S] cluster scaffold protein carrying a second [4Fe-4S](2+) cluster] + N(6)-octanoyl-L-lysyl-[protein] + 2 oxidized [2Fe-2S]-[ferredoxin] + 2 S-adenosyl-L-methionine + 4 H(+) = [[Fe-S] cluster scaffold protein] + N(6)-[(R)-dihydrolipoyl]-L-lysyl-[protein] + 4 Fe(3+) + 2 hydrogen sulfide + 2 5'-deoxyadenosine + 2 L-methionine + 2 reduced [2Fe-2S]-[ferredoxin]. It functions in the pathway protein modification; protein lipoylation via endogenous pathway; protein N(6)-(lipoyl)lysine from octanoyl-[acyl-carrier-protein]: step 2/2. Catalyzes the radical-mediated insertion of two sulfur atoms into the C-6 and C-8 positions of the octanoyl moiety bound to the lipoyl domains of lipoate-dependent enzymes, thereby converting the octanoylated domains into lipoylated derivatives. This Buchnera aphidicola subsp. Baizongia pistaciae (strain Bp) protein is Lipoyl synthase.